The primary structure comprises 479 residues: Chromosomal replication initiator protein DnaA (479 aa).

The domain I, interacts with DnaA modulators stretch occupies residues 1–71 (MNLTQIWKAT…RNALARVVGY (71 aa)). Residues 71–138 (YPVQVQVLIA…LDLASAMRSG (68 aa)) are domain II. A compositionally biased stretch (polar residues) spans 86–99 (TEPSPSLTLSNGSR). Residues 86–106 (TEPSPSLTLSNGSRLMSDPEP) form a disordered region. The segment at 139 to 355 (MLNPRYTFSS…GSLNRVAAYA (217 aa)) is domain III, AAA+ region. Positions 183, 185, 186, and 187 each coordinate ATP. Residues 356 to 479 (ELNRAPITIE…IRERIQMLRG (124 aa)) form a domain IV, binds dsDNA region.

Belongs to the DnaA family. In terms of assembly, oligomerizes as a right-handed, spiral filament on DNA at oriC.

It localises to the cytoplasm. In terms of biological role, plays an essential role in the initiation and regulation of chromosomal replication. ATP-DnaA binds to the origin of replication (oriC) to initiate formation of the DNA replication initiation complex once per cell cycle. Binds the DnaA box (a 9 base pair repeat at the origin) and separates the double-stranded (ds)DNA. Forms a right-handed helical filament on oriC DNA; dsDNA binds to the exterior of the filament while single-stranded (ss)DNA is stabiized in the filament's interior. The ATP-DnaA-oriC complex binds and stabilizes one strand of the AT-rich DNA unwinding element (DUE), permitting loading of DNA polymerase. After initiation quickly degrades to an ADP-DnaA complex that is not apt for DNA replication. Binds acidic phospholipids. The sequence is that of Chromosomal replication initiator protein DnaA from Chloroflexus aurantiacus (strain ATCC 29366 / DSM 635 / J-10-fl).